We begin with the raw amino-acid sequence, 304 residues long: Mitochondrial glycine transporter (304 aa).

Solcar repeat units lie at residues 25–114 (HPVI…LKQY), 121–205 (PTAL…TKNI), and 215–299 (LIPI…MMAK). Transmembrane regions (helical) follow at residues 31-56 (FLCGSISGTCSTLLFQPLDLLKTRLQ), 89-115 (GMSPSIVRCVPGVGIYFGTLYSLKQYF), 127-152 (VMLGVGSRSVAGVCMSPITVIKTRYE), 180-203 (GLTATLLRDAPFSGIYLMFYNQTK), 219-245 (TNFSCGIFAGILASLVTQPADVIKTHM), and 274-292 (GGIPRALRRTLMAAMAWTV).

It belongs to the mitochondrial carrier (TC 2.A.29) family. SLC25A38 subfamily. Preferentially expressed in erythroid cells.

The protein resides in the mitochondrion inner membrane. It carries out the reaction glycine(in) = glycine(out). Its function is as follows. Mitochondrial glycine transporter that imports glycine into the mitochondrial matrix. Plays an important role in providing glycine for the first enzymatic step in heme biosynthesis, the condensation of glycine with succinyl-CoA to produce 5-aminolevulinate (ALA) in the mitochondrial matrix. Required during erythropoiesis. In terms of biological role, plays a role as pro-apoptotic protein that induces caspase-dependent apoptosis. This Homo sapiens (Human) protein is Mitochondrial glycine transporter.